A 79-amino-acid chain; its full sequence is Small ribosomal subunit protein bS16 (79 aa).

This sequence belongs to the bacterial ribosomal protein bS16 family.

This is Small ribosomal subunit protein bS16 from Nitratidesulfovibrio vulgaris (strain ATCC 29579 / DSM 644 / CCUG 34227 / NCIMB 8303 / VKM B-1760 / Hildenborough) (Desulfovibrio vulgaris).